The primary structure comprises 254 residues: Aspartate/glutamate leucyltransferase (254 aa).

The protein belongs to the R-transferase family. Bpt subfamily.

The protein resides in the cytoplasm. It carries out the reaction N-terminal L-glutamyl-[protein] + L-leucyl-tRNA(Leu) = N-terminal L-leucyl-L-glutamyl-[protein] + tRNA(Leu) + H(+). The catalysed reaction is N-terminal L-aspartyl-[protein] + L-leucyl-tRNA(Leu) = N-terminal L-leucyl-L-aspartyl-[protein] + tRNA(Leu) + H(+). In terms of biological role, functions in the N-end rule pathway of protein degradation where it conjugates Leu from its aminoacyl-tRNA to the N-termini of proteins containing an N-terminal aspartate or glutamate. This chain is Aspartate/glutamate leucyltransferase, found in Xylella fastidiosa (strain M23).